We begin with the raw amino-acid sequence, 520 residues long: Probable kinase 098L (520 aa).

The 312-residue stretch at 82-393 (LTSVQSFGSK…NSPLLKKGFV (312 aa)) folds into the Protein kinase domain. ATP contacts are provided by residues 88-96 (FGSKSKQGI) and K111. The active-site Proton acceptor is the D205. Residues 416-442 (QTAQLIETDKEILDNLIDDLELKIVRK) adopt a coiled-coil conformation.

This sequence belongs to the protein kinase superfamily.

Its function is as follows. Probable kinase. In Aedes vexans (Inland floodwater mosquito), this protein is Probable kinase 098L.